We begin with the raw amino-acid sequence, 128 residues long: Conopressin-conophysin (128 aa).

Residues 1 to 27 form the signal peptide; that stretch reads MTRSAMQMGRLTLVLCLLLLLLLTTQA. Cysteines 28 and 33 form a disulfide. A Glycine amide modification is found at Gly36. Residues 37–44 constitute a propeptide that is removed on maturation; the sequence is GKRDVDER. 7 disulfide bridges follow: Cys50–Cys90, Cys53–Cys64, Cys58–Cys80, Cys65–Cys70, Cys97–Cys115, Cys109–Cys127, and Cys116–Cys121.

The protein belongs to the vasopressin/oxytocin family. As to expression, expressed by the venom gland.

Its subcellular location is the secreted. Functionally, targets vasopressin-oxytocin related receptors. Is more active on fish receptors than on their human counterparts, supporting an evolved role of this conopressin in the envenomation process. Acts as an agonist on zebrafish vasopressin receptors V1a1R (EC(50)=10.6 nM), V1a2R (EC(50)=44.06 nM, partial agonist), V2R (EC(50)=299.2 nM) and oxytocin receptor (EC(50)=353.73 nM, partial agonist). Shows a weaker activity on human receptors AVPR1B (EC(50)=51.92 nM), AVPR1A (EC(50)=123.78 nM), AVPR2 (EC(50)=299.2 nM) and oxytocin (OXTR) receptor (EC(50)=455.66 nM, partial agonist). In vivo, exhibits grooming and scratching behavior in mice, following intracerebral injection. The sequence is that of Conopressin-conophysin from Conus geographus (Geography cone).